Here is a 256-residue protein sequence, read N- to C-terminus: Ethylene-responsive transcription factor ERF084 (256 aa).

The AP2/ERF DNA-binding region spans 115 to 172 (GFMGVRKRPWGRWSAEIRDRIGRCRHWLGTFDTAEEAARAYDAAARRLRGTKAKTNFV).

It belongs to the AP2/ERF transcription factor family. ERF subfamily.

Its subcellular location is the nucleus. Functionally, probably acts as a transcriptional activator. Binds to the GCC-box pathogenesis-related promoter element. May be involved in the regulation of gene expression by stress factors and by components of stress signal transduction pathways. This chain is Ethylene-responsive transcription factor ERF084 (ERF084), found in Arabidopsis thaliana (Mouse-ear cress).